Reading from the N-terminus, the 113-residue chain is Ribonuclease P protein component (113 aa).

This sequence belongs to the RnpA family. In terms of assembly, consists of a catalytic RNA component (M1 or rnpB) and a protein subunit.

The enzyme catalyses Endonucleolytic cleavage of RNA, removing 5'-extranucleotides from tRNA precursor.. RNaseP catalyzes the removal of the 5'-leader sequence from pre-tRNA to produce the mature 5'-terminus. It can also cleave other RNA substrates such as 4.5S RNA. The protein component plays an auxiliary but essential role in vivo by binding to the 5'-leader sequence and broadening the substrate specificity of the ribozyme. The sequence is that of Ribonuclease P protein component from Ureaplasma parvum serovar 3 (strain ATCC 27815 / 27 / NCTC 11736).